Consider the following 519-residue polypeptide: Protein disulfide-isomerase A5 (519 aa).

Residues 1–21 (MARAGPAWLLLAIWVVLPSWL) form the signal peptide. Intrachain disulfides connect Cys-85–Cys-94, Cys-182–Cys-185, Cys-305–Cys-308, and Cys-426–Cys-429. Thioredoxin domains follow at residues 134–261 (FLKD…NPQP), 270–384 (PWAD…NPEA), and 378–506 (WMQN…ALRE). The short motif at 516 to 519 (KEEL) is the Prevents secretion from ER element.

Belongs to the protein disulfide isomerase family. As to quaternary structure, interacts with CALR (via P-domain).

The protein localises to the endoplasmic reticulum lumen. It catalyses the reaction Catalyzes the rearrangement of -S-S- bonds in proteins.. This is Protein disulfide-isomerase A5 (PDIA5) from Homo sapiens (Human).